Reading from the N-terminus, the 555-residue chain is GPI-anchor transamidase component PIGS (555 aa).

The Cytoplasmic portion of the chain corresponds to 2–18 (ATAGAAATDLEVVRGKR). The a cardiolipin site is built by Arg-15 and Arg-18. The chain crosses the membrane as a helical span at residues 19–39 (AALFFAAVAILLGLPLWWKTT). Residues 40-517 (ETYRAPLPYS…LHLLYFPDDQ (478 aa)) lie on the Lumenal side of the membrane. 2 N-linked (GlcNAc...) asparagine glycosylation sites follow: Asn-267 and Asn-370. Residues 518-532 (KFAIYIPLFLPMAVP) traverse the membrane as a helical segment. Residues 533–555 (ILLSLVKIFLETHKSWKKPEKID) lie on the Cytoplasmic side of the membrane.

It belongs to the PIGS family. In terms of assembly, heteropentamer. Part of the GPI-anchor transamidase complex, consisting of PIGK, PIGT, PIGS, PIGU and GAA1.

It localises to the endoplasmic reticulum membrane. It functions in the pathway glycolipid biosynthesis; glycosylphosphatidylinositol-anchor biosynthesis. In terms of biological role, component of the glycosylphosphatidylinositol-anchor (GPI-anchor) transamidase (GPI-T) complex that catalyzes the formation of the linkage between a proprotein and a GPI-anchor and participates in GPI anchored protein biosynthesis. The sequence is that of GPI-anchor transamidase component PIGS from Rattus norvegicus (Rat).